The primary structure comprises 254 residues: Type III pantothenate kinase (254 aa).

6-13 (DVGNSNIV) provides a ligand contact to ATP. Residues Tyr-100 and 107–110 (GADR) contribute to the substrate site. The active-site Proton acceptor is the Asp-109. Asp-129 contributes to the K(+) binding site. Thr-132 serves as a coordination point for ATP. Thr-184 is a substrate binding site.

The protein belongs to the type III pantothenate kinase family. As to quaternary structure, homodimer. The cofactor is NH4(+). It depends on K(+) as a cofactor.

Its subcellular location is the cytoplasm. It carries out the reaction (R)-pantothenate + ATP = (R)-4'-phosphopantothenate + ADP + H(+). It participates in cofactor biosynthesis; coenzyme A biosynthesis; CoA from (R)-pantothenate: step 1/5. In terms of biological role, catalyzes the phosphorylation of pantothenate (Pan), the first step in CoA biosynthesis. The polypeptide is Type III pantothenate kinase (Citrifermentans bemidjiense (strain ATCC BAA-1014 / DSM 16622 / JCM 12645 / Bem) (Geobacter bemidjiensis)).